The primary structure comprises 264 residues: Ribonuclease HII (264 aa).

The 192-residue stretch at 33–224 folds into the RNase H type-2 domain; sequence GPVAGVDEVG…VRRVASGSNT (192 aa). A divalent metal cation contacts are provided by Asp-39, Glu-40, and Asp-133. The interval 222 to 264 is disordered; that stretch reads SNTAEVADGQPDPRDGTAQTGEGRWSKSSHPATMRATGRAQGT.

The protein belongs to the RNase HII family. Mn(2+) is required as a cofactor. It depends on Mg(2+) as a cofactor.

Its subcellular location is the cytoplasm. It catalyses the reaction Endonucleolytic cleavage to 5'-phosphomonoester.. Functionally, endonuclease that specifically degrades the RNA of RNA-DNA hybrids. The chain is Ribonuclease HII from Mycobacterium bovis (strain ATCC BAA-935 / AF2122/97).